The primary structure comprises 239 residues: Large ribosomal subunit protein uL2 (239 aa).

The interval 200-239 (VNHPHGGKEHHIGRPSTVSRRAPPGRKVGHIAARRTGRRK) is disordered. Residues 222–239 (PPGRKVGHIAARRTGRRK) show a composition bias toward basic residues.

It belongs to the universal ribosomal protein uL2 family. As to quaternary structure, part of the 50S ribosomal subunit. Forms a bridge to the 30S subunit in the 70S ribosome.

Its function is as follows. One of the primary rRNA binding proteins. Required for association of the 30S and 50S subunits to form the 70S ribosome, for tRNA binding and peptide bond formation. It has been suggested to have peptidyltransferase activity; this is somewhat controversial. Makes several contacts with the 16S rRNA in the 70S ribosome. The protein is Large ribosomal subunit protein uL2 of Thermococcus kodakarensis (strain ATCC BAA-918 / JCM 12380 / KOD1) (Pyrococcus kodakaraensis (strain KOD1)).